The sequence spans 296 residues: tRNA pseudouridine synthase B (296 aa).

The active-site Nucleophile is aspartate 38.

It belongs to the pseudouridine synthase TruB family. Type 1 subfamily.

The catalysed reaction is uridine(55) in tRNA = pseudouridine(55) in tRNA. In terms of biological role, responsible for synthesis of pseudouridine from uracil-55 in the psi GC loop of transfer RNAs. The polypeptide is tRNA pseudouridine synthase B (Ehrlichia chaffeensis (strain ATCC CRL-10679 / Arkansas)).